The sequence spans 653 residues: MSETNQVQNHAFASDNAKILQLMIHSLYSNKEIFLRELVSNAADAADKLRFKALSDNTLYENDGDLRVRVSCDKENNTLTISDNGIGMNVDEVIEHLGTIAKSGTAEFFSQLSGDQASDSQLIGQFGVGFYSAFIVADKVTVRTRKAGDSATDGVEWISAGEGEFTTAKIEKTNRGTDIILHLKEDESEYADDWRLKSIVTKYSDHISVSVEMLTAEVPAVEAVAEVTDEKDNVTRPAADAVDAIPALWEPVNKATALWTREKADITDEEYKEFYKHVSHDFGDPLLWEHNRVEGKTEYTSLLYVPTKAPFDMYNREKQHGLKLFVQRVFIMDDAEQFMPTYLRFVKGLLDSNDLPLNVSREILQDNKVTQAIRKGCTKRVLKMLEKLGNKDADKYQGFWDEFGQVLKEGPAEDHANKEQVAGLLRFASTHEDSTTQNVSLASYIERMKEGQDKIYFVVADSFEAAKNSPHLEVFRKKGIEVLLMSDRIDEWLVSHLTEFDGKQLQSVTRGGLDLGDMDDAETKEAQEKLEKEYDSVVKRIKASLDGKVKEVKLSQRLTDSPACIVADDDDMSSQMAKLMASVGQEVPDTLPIFEINGEHALVKHVADEQDDDMFNQWVEVLFEQAMLAERGSLKDPASFVSRLNKLMLSLTK.

Residues 1–361 are a; substrate-binding; the sequence is MSETNQVQNH…SNDLPLNVSR (361 aa). The tract at residues 362-578 is b; it reads EILQDNKVTQ…DDDMSSQMAK (217 aa). The segment at 579 to 653 is c; that stretch reads LMASVGQEVP…LNKLMLSLTK (75 aa).

This sequence belongs to the heat shock protein 90 family. In terms of assembly, homodimer.

The protein localises to the cytoplasm. In terms of biological role, molecular chaperone. Has ATPase activity. In Colwellia psychrerythraea (strain 34H / ATCC BAA-681) (Vibrio psychroerythus), this protein is Chaperone protein HtpG.